Here is a 194-residue protein sequence, read N- to C-terminus: Fe/S biogenesis protein NfuA (194 aa).

[4Fe-4S] cluster-binding residues include Cys152 and Cys155.

Belongs to the NfuA family. As to quaternary structure, homodimer. [4Fe-4S] cluster is required as a cofactor.

Its function is as follows. Involved in iron-sulfur cluster biogenesis. Binds a 4Fe-4S cluster, can transfer this cluster to apoproteins, and thereby intervenes in the maturation of Fe/S proteins. Could also act as a scaffold/chaperone for damaged Fe/S proteins. The polypeptide is Fe/S biogenesis protein NfuA (Pseudomonas entomophila (strain L48)).